The primary structure comprises 593 residues: Proteasome-associated ATPase (593 aa).

The stretch at aspartate 5 to proline 94 forms a coiled coil. Residue glycine 281–leucine 286 participates in ATP binding. Residues glycine 574–leucine 593 form a disordered region. The segment covering glutamate 584–leucine 593 has biased composition (polar residues). The docks into pockets in the proteasome alpha-ring stretch occupies residues tyrosine 592 to leucine 593.

This sequence belongs to the AAA ATPase family. As to quaternary structure, homohexamer. Assembles into a hexameric ring structure that caps the 20S proteasome core. Strongly interacts with the prokaryotic ubiquitin-like protein Pup through a hydrophobic interface; the interacting region of ARC lies in its N-terminal coiled-coil domain. There is one Pup binding site per ARC hexamer ring. Upon ATP-binding, the C-terminus of ARC interacts with the alpha-rings of the proteasome core, possibly by binding to the intersubunit pockets.

It functions in the pathway protein degradation; proteasomal Pup-dependent pathway. Its function is as follows. ATPase which is responsible for recognizing, binding, unfolding and translocation of pupylated proteins into the bacterial 20S proteasome core particle. May be essential for opening the gate of the 20S proteasome via an interaction with its C-terminus, thereby allowing substrate entry and access to the site of proteolysis. Thus, the C-termini of the proteasomal ATPase may function like a 'key in a lock' to induce gate opening and therefore regulate proteolysis. The protein is Proteasome-associated ATPase of Salinispora tropica (strain ATCC BAA-916 / DSM 44818 / JCM 13857 / NBRC 105044 / CNB-440).